A 395-amino-acid polypeptide reads, in one-letter code: Phosphonoacetaldehyde reductase (395 aa).

Residues D199, H268, and H282 each coordinate Fe cation.

The protein belongs to the iron-containing alcohol dehydrogenase family. Fe cation serves as cofactor.

It carries out the reaction 2-hydroxyethylphosphonate + NAD(+) = phosphonoacetaldehyde + NADH + H(+). It functions in the pathway secondary metabolite biosynthesis; bialaphos biosynthesis. Its function is as follows. Catalyzes the reduction of phosphonoacetaldehyde to 2-hydroxyethylphosphonate, a step in the biosynthesis of phosphinothricin tripeptide. Phosphinothricin tripeptide (PTT), also known as bialaphos (BA), is a natural-product antibiotic and potent herbicide. Can use both NAD and NADP but the preferred substrate is NAD. This chain is Phosphonoacetaldehyde reductase (phpC), found in Streptomyces viridochromogenes (strain DSM 40736 / JCM 4977 / BCRC 1201 / Tue 494).